We begin with the raw amino-acid sequence, 402 residues long: Speedy protein E2B (402 aa).

The disordered stretch occupies residues 1–89 (MDRTETRFRK…EEPEKELAPE (89 aa)). The segment covering 16-39 (GKITTSRQPHPQNEQSPQRSTSGY) has biased composition (polar residues). The segment covering 76 to 89 (DESEEEPEKELAPE) has biased composition (acidic residues).

Belongs to the Speedy/Ringo family.

This chain is Speedy protein E2B (SPDYE2B), found in Homo sapiens (Human).